Here is a 201-residue protein sequence, read N- to C-terminus: Protein CD300H (201 aa).

A signal peptide spans 1–24 (MTQRAGAAMLPSALLLLCVPGCLT). The region spanning 25–123 (VSGPSTVMGA…ATILQEDGLS (99 aa)) is the Ig-like V-type domain. The Extracellular segment spans residues 25 to 168 (VSGPSTVMGA…CQGSLPSSTC (144 aa)). Residues cysteine 43 and cysteine 111 are joined by a disulfide bond. A glycan (N-linked (GlcNAc...) asparagine) is linked at asparagine 100. A helical transmembrane segment spans residues 169 to 189 (FLLLPLLKVPLLLSILGAILW). Residues 190–201 (VNRPWRTPWTES) are Cytoplasmic-facing.

This sequence belongs to the CD300 family. In terms of assembly, interacts with TYROBP and HCST. As to expression, expressed on CD16+ monocytes and myeloid dendritic cells (at protein level). By contrast, not detected in lymphocytes nor granulocytes (at protein level).

The protein resides in the membrane. It is found in the secreted. Functionally, may play an important role in innate immunity by mediating a signal for the production of a neutrophil chemoattractant. The sequence is that of Protein CD300H from Homo sapiens (Human).